The chain runs to 391 residues: S-adenosylmethionine synthase (391 aa).

His14 contributes to the ATP binding site. Residue Asp16 coordinates Mg(2+). Glu42 is a K(+) binding site. 2 residues coordinate L-methionine: Glu55 and Gln98. Residues 98 to 108 are flexible loop; it reads QSVDIAMGVDE. ATP contacts are provided by residues 172–174, 238–239, Asp247, 253–254, Ala270, and Lys274; these read DGK, RF, and RK. Residue Asp247 participates in L-methionine binding. Lys278 provides a ligand contact to L-methionine.

This sequence belongs to the AdoMet synthase family. In terms of assembly, homotetramer; dimer of dimers. It depends on Mg(2+) as a cofactor. The cofactor is K(+).

It localises to the cytoplasm. It carries out the reaction L-methionine + ATP + H2O = S-adenosyl-L-methionine + phosphate + diphosphate. The protein operates within amino-acid biosynthesis; S-adenosyl-L-methionine biosynthesis; S-adenosyl-L-methionine from L-methionine: step 1/1. Catalyzes the formation of S-adenosylmethionine (AdoMet) from methionine and ATP. The overall synthetic reaction is composed of two sequential steps, AdoMet formation and the subsequent tripolyphosphate hydrolysis which occurs prior to release of AdoMet from the enzyme. This Clostridium botulinum (strain Hall / ATCC 3502 / NCTC 13319 / Type A) protein is S-adenosylmethionine synthase.